A 127-amino-acid chain; its full sequence is Holo-[acyl-carrier-protein] synthase (127 aa).

D8 and E60 together coordinate Mg(2+).

It belongs to the P-Pant transferase superfamily. AcpS family. Mg(2+) is required as a cofactor.

The protein localises to the cytoplasm. The catalysed reaction is apo-[ACP] + CoA = holo-[ACP] + adenosine 3',5'-bisphosphate + H(+). Its function is as follows. Transfers the 4'-phosphopantetheine moiety from coenzyme A to a Ser of acyl-carrier-protein. The polypeptide is Holo-[acyl-carrier-protein] synthase (Marinomonas sp. (strain MWYL1)).